We begin with the raw amino-acid sequence, 496 residues long: Rhamnulokinase (496 aa).

ATP is bound at residue 13–17 (ASSGR). Substrate is bound by residues Gly83 and 236–238 (HDT). Asp237 (proton acceptor) is an active-site residue. Thr259 contacts ATP. Asn296 serves as a coordination point for substrate. Residue Gln304 coordinates ATP. Cysteines 353 and 370 form a disulfide. Gly402 provides a ligand contact to ATP. Cys413 and Cys417 are disulfide-bonded.

This sequence belongs to the rhamnulokinase family. Requires Mg(2+) as cofactor.

It catalyses the reaction L-rhamnulose + ATP = L-rhamnulose 1-phosphate + ADP + H(+). Its pathway is carbohydrate degradation; L-rhamnose degradation; glycerone phosphate from L-rhamnose: step 2/3. Involved in the catabolism of L-rhamnose (6-deoxy-L-mannose). Catalyzes the transfer of the gamma-phosphate group from ATP to the 1-hydroxyl group of L-rhamnulose to yield L-rhamnulose 1-phosphate. This chain is Rhamnulokinase, found in Pectobacterium atrosepticum (strain SCRI 1043 / ATCC BAA-672) (Erwinia carotovora subsp. atroseptica).